The sequence spans 547 residues: Chaperonin GroEL 1 (547 aa).

Residues 30–33 (TLGP), Lys-51, 87–91 (DGTTT), Gly-415, and Asp-496 each bind ATP.

This sequence belongs to the chaperonin (HSP60) family. Forms a cylinder of 14 subunits composed of two heptameric rings stacked back-to-back. Interacts with the co-chaperonin GroES.

Its subcellular location is the cytoplasm. It catalyses the reaction ATP + H2O + a folded polypeptide = ADP + phosphate + an unfolded polypeptide.. Its function is as follows. Together with its co-chaperonin GroES, plays an essential role in assisting protein folding. The GroEL-GroES system forms a nano-cage that allows encapsulation of the non-native substrate proteins and provides a physical environment optimized to promote and accelerate protein folding. This Gluconacetobacter diazotrophicus (strain ATCC 49037 / DSM 5601 / CCUG 37298 / CIP 103539 / LMG 7603 / PAl5) protein is Chaperonin GroEL 1.